The sequence spans 775 residues: Glutamine--tRNA ligase (775 aa).

N-acetylalanine is present on A2. The residue at position 70 (S70) is a Phosphoserine. ATP contacts are provided by residues 271-273 and 277-283; these read EPN and HIGHAKA. D303 is a binding site for L-glutamine. At K309 the chain carries N6-acetyllysine. Y438 lines the L-glutamine pocket. Residues T457, 486 to 487, and 494 to 496 contribute to the ATP site; these read RL and VSK. S495 carries the post-translational modification Phosphoserine.

Belongs to the class-I aminoacyl-tRNA synthetase family. As to quaternary structure, monomer. Part of a multisubunit complex that groups tRNA ligases for Arg (RARS1), Asp (DARS1), Gln (QARS1), Ile (IARS1), Leu (LARS1), Lys (KARS1), Met (MARS1) the bifunctional ligase for Glu and Pro (EPRS1) and the auxiliary subunits AIMP1/p43, AIMP2/p38 and EEF1E1/p18. Interacts with RARS1. Part of a complex composed of RARS1, QARS1 and AIMP1.

The protein resides in the cytoplasm. The protein localises to the cytosol. The catalysed reaction is tRNA(Gln) + L-glutamine + ATP = L-glutaminyl-tRNA(Gln) + AMP + diphosphate. In terms of biological role, glutamine--tRNA ligase. Plays a critical role in brain development. The chain is Glutamine--tRNA ligase (Qars1) from Mus musculus (Mouse).